The following is a 457-amino-acid chain: Streptogrisin-C (457 aa).

The tat-type signal signal peptide spans 1–34 (MERTTLRRRALVAGTATVAVGALALAGLTGVASA). Residues 35 to 202 (DPAATAAPPV…ARSAEQPRAL (168 aa)) constitute a propeptide that is removed on maturation. The catalytic stretch occupies residues 203–393 (ADIRGGDAYY…QAYGLTLVTS (191 aa)). Cysteine 219 and cysteine 239 are disulfide-bonded. Catalysis depends on charge relay system residues histidine 238 and aspartate 266. Cystine bridges form between cysteine 305-cysteine 315 and cysteine 341-cysteine 368. The active-site Charge relay system is serine 347. Residues 393 to 412 (SGGGTPTDPPTTPPTDSPGG) are disordered. A linker region spans residues 394 to 413 (GGGTPTDPPTTPPTDSPGGT). Over residues 399–408 (TDPPTTPPTD) the composition is skewed to pro residues. Positions 415 to 457 (AVGTAYAAGATVTYGGATYRCLQAHTAQPGWTPADVPALWQRV) constitute a Chitin-binding type-3 domain.

This sequence belongs to the peptidase S1 family. As to quaternary structure, monomer. Predicted to be exported by the Tat system. The position of the signal peptide cleavage has not been experimentally proven.

Hydrolysis of proteins with specificity similar to chymotrypsin. May be specialized for the degradation of chitin-linked proteins. Has a primary specificity for large aliphatic or aromatic amino acids. This Streptomyces griseus protein is Streptogrisin-C (sprC).